A 408-amino-acid chain; its full sequence is 8-amino-7-oxononanoate synthase (408 aa).

R20 is a binding site for substrate. Pyridoxal 5'-phosphate is bound at residue 119 to 120; it reads GY. H144 contacts substrate. Positions 190, 218, and 246 each coordinate pyridoxal 5'-phosphate. K249 carries the N6-(pyridoxal phosphate)lysine modification. T372 is a substrate binding site.

This sequence belongs to the class-II pyridoxal-phosphate-dependent aminotransferase family. BioF subfamily. In terms of assembly, homodimer. Pyridoxal 5'-phosphate is required as a cofactor.

The enzyme catalyses 6-carboxyhexanoyl-[ACP] + L-alanine + H(+) = (8S)-8-amino-7-oxononanoate + holo-[ACP] + CO2. Its pathway is cofactor biosynthesis; biotin biosynthesis. Its function is as follows. Catalyzes the decarboxylative condensation of pimeloyl-[acyl-carrier protein] and L-alanine to produce 8-amino-7-oxononanoate (AON), [acyl-carrier protein], and carbon dioxide. This chain is 8-amino-7-oxononanoate synthase, found in Leptothrix cholodnii (strain ATCC 51168 / LMG 8142 / SP-6) (Leptothrix discophora (strain SP-6)).